A 170-amino-acid polypeptide reads, in one-letter code: UPF0690 protein C1orf52 homolog (170 aa).

2 disordered regions span residues 1–56 and 124–170; these read MAAE…PDEL and SNVY…KRKV. The segment covering 46 to 56 has biased composition (basic and acidic residues); it reads DTKKLPGPDEL. The span at 144–159 shows a compositional bias: acidic residues; it reads EEEEAREDSPPSDDEQ.

Belongs to the UPF0690 family.

This is UPF0690 protein C1orf52 homolog from Xenopus tropicalis (Western clawed frog).